Reading from the N-terminus, the 146-residue chain is Hemoglobin subunit beta (146 aa).

Valine 1 bears the N-acetylvaline mark. The 145-residue stretch at histidine 2–histidine 146 folds into the Globin domain. Threonine 12 is subject to Phosphothreonine. Serine 44 is subject to Phosphoserine. Lysine 59 bears the N6-acetyllysine mark. Histidine 63 contacts heme b. Lysine 82 is subject to N6-acetyllysine. Histidine 92 is a heme b binding site. Cysteine 93 is subject to S-nitrosocysteine. Lysine 144 carries the N6-acetyllysine modification.

It belongs to the globin family. In terms of assembly, heterotetramer of two alpha chains and two beta chains. In terms of tissue distribution, red blood cells.

Its function is as follows. Involved in oxygen transport from the lung to the various peripheral tissues. This is Hemoglobin subunit beta (HBB) from Nasua nasua (Ring-tailed coati).